A 329-amino-acid polypeptide reads, in one-letter code: GTP 3',8-cyclase (329 aa).

The region spanning 8–234 (AFARKFYYLR…QLRQRSDGPA (227 aa)) is the Radical SAM core domain. GTP is bound at residue arginine 17. [4Fe-4S] cluster contacts are provided by cysteine 24 and cysteine 28. Tyrosine 30 provides a ligand contact to S-adenosyl-L-methionine. Cysteine 31 is a binding site for [4Fe-4S] cluster. Arginine 68 is a GTP binding site. Residue glycine 72 coordinates S-adenosyl-L-methionine. Threonine 99 lines the GTP pocket. S-adenosyl-L-methionine is bound at residue serine 123. Residue lysine 160 participates in GTP binding. Residue methionine 194 coordinates S-adenosyl-L-methionine. [4Fe-4S] cluster is bound by residues cysteine 257 and cysteine 260. 262–264 (RLR) lines the GTP pocket. Cysteine 274 is a [4Fe-4S] cluster binding site.

Belongs to the radical SAM superfamily. MoaA family. As to quaternary structure, monomer and homodimer. It depends on [4Fe-4S] cluster as a cofactor.

It carries out the reaction GTP + AH2 + S-adenosyl-L-methionine = (8S)-3',8-cyclo-7,8-dihydroguanosine 5'-triphosphate + 5'-deoxyadenosine + L-methionine + A + H(+). Its pathway is cofactor biosynthesis; molybdopterin biosynthesis. Catalyzes the cyclization of GTP to (8S)-3',8-cyclo-7,8-dihydroguanosine 5'-triphosphate. The protein is GTP 3',8-cyclase of Salmonella newport (strain SL254).